The primary structure comprises 387 residues: Succinate--CoA ligase [ADP-forming] subunit beta (387 aa).

ATP is bound by residues K46, 53-55, E99, C102, and E107; that span reads GRG. Mg(2+) contacts are provided by N196 and D210. Substrate contacts are provided by residues N261 and 318-320; that span reads GIV.

The protein belongs to the succinate/malate CoA ligase beta subunit family. In terms of assembly, heterotetramer of two alpha and two beta subunits. Mg(2+) serves as cofactor.

It carries out the reaction succinate + ATP + CoA = succinyl-CoA + ADP + phosphate. It catalyses the reaction GTP + succinate + CoA = succinyl-CoA + GDP + phosphate. It functions in the pathway carbohydrate metabolism; tricarboxylic acid cycle; succinate from succinyl-CoA (ligase route): step 1/1. Succinyl-CoA synthetase functions in the citric acid cycle (TCA), coupling the hydrolysis of succinyl-CoA to the synthesis of either ATP or GTP and thus represents the only step of substrate-level phosphorylation in the TCA. The beta subunit provides nucleotide specificity of the enzyme and binds the substrate succinate, while the binding sites for coenzyme A and phosphate are found in the alpha subunit. This chain is Succinate--CoA ligase [ADP-forming] subunit beta, found in Campylobacter hominis (strain ATCC BAA-381 / DSM 21671 / CCUG 45161 / LMG 19568 / NCTC 13146 / CH001A).